Consider the following 283-residue polypeptide: Elongation factor Ts (283 aa).

Residues 80–83 form an involved in Mg(2+) ion dislocation from EF-Tu region; it reads TDFV.

The protein belongs to the EF-Ts family.

The protein resides in the cytoplasm. Its function is as follows. Associates with the EF-Tu.GDP complex and induces the exchange of GDP to GTP. It remains bound to the aminoacyl-tRNA.EF-Tu.GTP complex up to the GTP hydrolysis stage on the ribosome. This Actinobacillus pleuropneumoniae serotype 5b (strain L20) protein is Elongation factor Ts.